A 164-amino-acid chain; its full sequence is Putative 4-hydroxy-4-methyl-2-oxoglutarate aldolase (164 aa).

Substrate contacts are provided by residues 80 to 83 (GGNL) and arginine 102. Residue aspartate 103 coordinates a divalent metal cation.

The protein belongs to the class II aldolase/RraA-like family. As to quaternary structure, homotrimer. Requires a divalent metal cation as cofactor.

The catalysed reaction is 4-hydroxy-4-methyl-2-oxoglutarate = 2 pyruvate. The enzyme catalyses oxaloacetate + H(+) = pyruvate + CO2. Catalyzes the aldol cleavage of 4-hydroxy-4-methyl-2-oxoglutarate (HMG) into 2 molecules of pyruvate. Also contains a secondary oxaloacetate (OAA) decarboxylase activity due to the common pyruvate enolate transition state formed following C-C bond cleavage in the retro-aldol and decarboxylation reactions. The protein is Putative 4-hydroxy-4-methyl-2-oxoglutarate aldolase of Paraburkholderia phytofirmans (strain DSM 17436 / LMG 22146 / PsJN) (Burkholderia phytofirmans).